The following is a 143-amino-acid chain: Transcriptional regulator MraZ (143 aa).

2 consecutive SpoVT-AbrB domains span residues 5 to 47 (EYRH…TQEE) and 76 to 119 (ATEC…SEDR).

The protein belongs to the MraZ family. Forms oligomers.

Its subcellular location is the cytoplasm. It localises to the nucleoid. The chain is Transcriptional regulator MraZ from Ligilactobacillus salivarius (strain UCC118) (Lactobacillus salivarius).